The primary structure comprises 405 residues: Argininosuccinate synthase (405 aa).

Residues 10 to 18 and alanine 38 contribute to the ATP site; that span reads AYSGGVDTS. Tyrosine 89 provides a ligand contact to L-citrulline. Glycine 119 is an ATP binding site. Residues threonine 121, asparagine 125, and aspartate 126 each contribute to the L-aspartate site. Asparagine 125 provides a ligand contact to L-citrulline. L-citrulline-binding residues include arginine 129, serine 177, serine 186, glutamate 262, and tyrosine 274.

It belongs to the argininosuccinate synthase family. Type 1 subfamily. Homotetramer.

The protein localises to the cytoplasm. The catalysed reaction is L-citrulline + L-aspartate + ATP = 2-(N(omega)-L-arginino)succinate + AMP + diphosphate + H(+). It functions in the pathway amino-acid biosynthesis; L-arginine biosynthesis; L-arginine from L-ornithine and carbamoyl phosphate: step 2/3. This is Argininosuccinate synthase from Synechococcus sp. (strain RCC307).